Here is a 192-residue protein sequence, read N- to C-terminus: Large ribosomal subunit protein bL25 (192 aa).

It belongs to the bacterial ribosomal protein bL25 family. CTC subfamily. As to quaternary structure, part of the 50S ribosomal subunit; part of the 5S rRNA/L5/L18/L25 subcomplex. Contacts the 5S rRNA. Binds to the 5S rRNA independently of L5 and L18.

Functionally, this is one of the proteins that binds to the 5S RNA in the ribosome where it forms part of the central protuberance. This is Large ribosomal subunit protein bL25 from Solidesulfovibrio magneticus (strain ATCC 700980 / DSM 13731 / RS-1) (Desulfovibrio magneticus).